The chain runs to 241 residues: Caffeoyl-CoA O-methyltransferase (241 aa).

A substrate-binding site is contributed by K14. Residues T58, E80, 82 to 83 (GV), S88, D106, and A135 each bind S-adenosyl-L-methionine. D158 is a substrate binding site. Residue D158 participates in a divalent metal cation binding. D160 lines the S-adenosyl-L-methionine pocket. Residues D184 and N185 each contribute to the a divalent metal cation site.

It belongs to the class I-like SAM-binding methyltransferase superfamily. Cation-dependent O-methyltransferase family. CCoAMT subfamily. A divalent metal cation serves as cofactor.

The enzyme catalyses (E)-caffeoyl-CoA + S-adenosyl-L-methionine = (E)-feruloyl-CoA + S-adenosyl-L-homocysteine + H(+). It participates in aromatic compound metabolism; phenylpropanoid biosynthesis. In terms of biological role, methylates caffeoyl-CoA to feruloyl-CoA and 5-hydroxyferuloyl-CoA to sinapoyl-CoA. Plays a role in the synthesis of feruloylated polysaccharides. Involved in the reinforcement of the plant cell wall. Also involved in the responding to wounding or pathogen challenge by the increased formation of cell wall-bound ferulic acid polymers. This is Caffeoyl-CoA O-methyltransferase from Stellaria longipes (Longstalk starwort).